The following is a 351-amino-acid chain: Dysbindin (351 aa).

At S11 the chain carries Phosphoserine. Residues 88 to 181 (EKKKTSLVEL…ELDAEHAQKV (94 aa)) adopt a coiled-coil conformation. The tract at residues 173-331 (LDAEHAQKVL…DEEEVQVDTA (159 aa)) is dysbindin. The Nuclear export signal motif lies at 243–256 (LMDISDQEALDVFL). Positions 286–351 (PNPSELRAKP…TPDGGEDSDS (66 aa)) are disordered. The span at 296-305 (PSSSSTCTDS) shows a compositional bias: polar residues. Residues S316, S321, and S349 each carry the phosphoserine modification.

The protein belongs to the dysbindin family. In terms of assembly, interacts (via its coiled coil domain) with KXD1. Interacts with CMYA5, PI4K2 and RNF151. Component of the biogenesis of lysosome-related organelles complex 1 (BLOC-1) composed of at least BLOC1S1, BLOC1S2, BLOC1S3, BLOC1S4, BLOC1S5, BLOC1S6, DTNBP1/BLOC1S7 and SNAPIN/BLOC1S8. Interacts directly in the complex with BLOC1S5, BLOC1S6 and SNAPIN/BLOC1S8. The BLOC-1 complex associates with the AP-3 protein complex and membrane protein cargos. This BLOC-1 complex also associates with the BLOC-2 complex in endosomes. Binds to DTNA and DTNB but may not be a physiological binding partner. Interacts (isoform 1 and isoform 2 only) with the DNA-dependent protein kinase complex DNA-PK; the interaction phosphorylates DTNBP1 in vitro. Interacts directly in this complex with XRCC5 and XRCC6. Interacts with AP3M1, AP3B2 and TRIM32. Interacts with XPO1; the interaction exports DTNBP1 out of the nucleus. Post-translationally, ubiquitinated by TRIM32. Ubiquitination leads to DTNBP1 degradation. Isoforms 1 and 2 highly phosphorylated by PRKDC in vitro. Isoform 3 only weakly phosphorylated by PRKDC in vitro. As to expression, detected in brain, in neurons and in neuropil. Isoform 1 is expressed in the cerebral cortex, and hippocampal frontal (HF). Specific expression in the posterior half of the superior temporal gyrus (pSTG). Higher expression of isoform 2 and 3 in the HF than in the pSTG while isoform 1 shows no difference in expression in these areas. In the HF, detected in dentate gyrus (DG) and in pyramidal cells of hippocampus CA2 and CA3 (at protein level). Expressed in all principal neuronal populations of the HF, namely pyramidal neurons in the subiculum and CA1-3, granule cells in the dense cell layer of the DG (DGg), and polymorph cells in the hilus of the DG (DGh). Maximal levels in CA2, CA3, and DGh. Isoform 2 not expressed in the cerebral cortex.

It localises to the cytoplasm. The protein localises to the cytoplasmic vesicle membrane. The protein resides in the endosome membrane. It is found in the melanosome membrane. Its subcellular location is the postsynaptic density. It localises to the endoplasmic reticulum. The protein localises to the nucleus. The protein resides in the cytoplasmic vesicle. It is found in the secretory vesicle. Its subcellular location is the synaptic vesicle membrane. It localises to the postsynaptic cell membrane. Component of the BLOC-1 complex, a complex that is required for normal biogenesis of lysosome-related organelles (LRO), such as platelet dense granules and melanosomes. In concert with the AP-3 complex, the BLOC-1 complex is required to target membrane protein cargos into vesicles assembled at cell bodies for delivery into neurites and nerve terminals. The BLOC-1 complex, in association with SNARE proteins, is also proposed to be involved in neurite extension. Associates with the BLOC-2 complex to facilitate the transport of TYRP1 independent of AP-3 function. Plays a role in synaptic vesicle trafficking and in neurotransmitter release. Plays a role in the regulation of cell surface exposure of DRD2. May play a role in actin cytoskeleton reorganization and neurite outgrowth. May modulate MAPK8 phosphorylation. Appears to promote neuronal transmission and viability through regulating the expression of SNAP25 and SYN1, modulating PI3-kinase-Akt signaling and influencing glutamatergic release. Regulates the expression of SYN1 through binding to its promoter. Modulates prefrontal cortical activity via the dopamine/D2 pathway. In Homo sapiens (Human), this protein is Dysbindin (DTNBP1).